The following is a 604-amino-acid chain: MTDVSVSKIRNFCIIAHIDHGKSTLADRLLQETGTVQAREMKEQFLDNMELERERGITIKLQAARMNYRAQDGEQYVLNLIDTPGHVDFSYEVSRSLQACEGALLVVDASQGVEAQTLANVYLALENDLEIIPVPNKIDLPGADPERVKREIEEVIGLDCSGAIEASAKSGIGIGEILESIVHLVPPPSDTTGEPLRALIFDSYYDPYRGVIVYFRVIDGTVRKGDRIRLMASGKEYEIDELGVLSPNQVQVEELHAGEVGYIAASIKAVADARVGDTITLARARATEPLPGYVEAKPMVFCGLFPTDSDRYPDLRDALEKLQLSDAALQYEPETSSAMGFGFRCGFLGLLHMEIVQERLEREYNLDLITTAPSVVYQVTTLDGEVLRLDNPSKLPPPQQREKIEEPYVKVEIITPENYVGALMDLCQTRRGIFIDMKYLTQERTTLIYEMPLAEVVTDFFDQMKSRTKGYASMEYSLIGYREGELVRMDILINSEPVDPLATIVHRDKAYYVGKALVEKLKELIPRHQFKIPLQAAIGSRVIASESIPALRKDVLAKCYGGDISRKKKLLQKQAKGKKRMKAIGTVDVPQEAFMAVLKLDREG.

Residues 7-189 (SKIRNFCIIA…SIVHLVPPPS (183 aa)) form the tr-type G domain. Residues 19-24 (DHGKST) and 136-139 (NKID) contribute to the GTP site.

This sequence belongs to the TRAFAC class translation factor GTPase superfamily. Classic translation factor GTPase family. LepA subfamily.

The protein localises to the cell inner membrane. It catalyses the reaction GTP + H2O = GDP + phosphate + H(+). Functionally, required for accurate and efficient protein synthesis under certain stress conditions. May act as a fidelity factor of the translation reaction, by catalyzing a one-codon backward translocation of tRNAs on improperly translocated ribosomes. Back-translocation proceeds from a post-translocation (POST) complex to a pre-translocation (PRE) complex, thus giving elongation factor G a second chance to translocate the tRNAs correctly. Binds to ribosomes in a GTP-dependent manner. This chain is Elongation factor 4, found in Synechococcus sp. (strain ATCC 27144 / PCC 6301 / SAUG 1402/1) (Anacystis nidulans).